The primary structure comprises 804 residues: Exocyst complex component 6 (804 aa).

This sequence belongs to the SEC15 family. The exocyst complex is composed of EXOC1, EXOC2, EXOC3, EXOC4, EXOC5, EXOC6, EXOC7 and EXOC8. Interacts with CNTRL. Interacts with RAB11A in a GTP-dependent manner.

The protein localises to the cytoplasm. The protein resides in the perinuclear region. Its subcellular location is the cell projection. It localises to the growth cone. It is found in the midbody. The protein localises to the midbody ring. In terms of biological role, component of the exocyst complex involved in the docking of exocytic vesicles with fusion sites on the plasma membrane. Together with RAB11A, RAB3IP, RAB8A, PARD3, PRKCI, ANXA2, CDC42 and DNMBP promotes transcytosis of PODXL to the apical membrane initiation sites (AMIS), apical surface formation and lumenogenesis. The chain is Exocyst complex component 6 (EXOC6) from Homo sapiens (Human).